The following is a 102-amino-acid chain: Large ribosomal subunit protein eL30 (102 aa).

The protein belongs to the eukaryotic ribosomal protein eL30 family. Part of the 50S ribosomal subunit.

In Thermococcus kodakarensis (strain ATCC BAA-918 / JCM 12380 / KOD1) (Pyrococcus kodakaraensis (strain KOD1)), this protein is Large ribosomal subunit protein eL30.